The primary structure comprises 1116 residues: MSADAVFCELGARTNFSFLEGAAPAEEMVVFAKKAGLAGLGIADRNSVAGVVRAHAKAKVEGYPFQPGARLVFADGTPDILAYPKNRRGWGHLCRLLSAGNLRSKKGDCTLHLADLLEWQEELLLIVMQGEGRPEPESLEVLLGTLKEHAGNRLYLGLAPHYDGFDRHDFAVLAAIARKAGIGLLATNDALYHDPHYRPLADVVTSIREHVPIAGAGFLLQKNAERHLKGPREMARLFSDYPEAIANTRKFFRELAFSLDELSHQYPDENADGETPAESLRRLVAEGAAERYPEGVPEKVMRQIDYELELIHDKKYEPYFLTVHKLVKFARSVNILCQGRGSAANSSVCFCLGITDVDPQKFTLLFDRFLSKDRDEPPDIDVDFEHERREEVIQYIYRTYGKEHAGLTAAVISYRSRSAGREVAKAFGLSEDVQSALVSSIWGWGTSPFTEEQAKGAGLDAADPLTRRVLAYASLLMNFPRHLSQHVGGFVITRDRLDEVVPIMNTAMPDRYMIEWDKDDLDELKILKVDVLALGMLTCLAKGFKLLEAHYGEPITLAEIYQDHRDAVYDMICRADTVGVFQIESRAQMSMLPRLQPREMYDLVIEVAIVRPGPIQGNMVHPYLKRREAQRRGEAVVYPSPELKAVLERTLGVPLFQEQAMQIAITAAGFSPSEADRLRRAMATFKRTGTIHTFERKMVEGMVANDYEREFAERCFNQIKGFGEYGFPESHAASFASLVYASAWLKTYYPDIFCAALLNAQPMGFYAPAQLVRDAREHGVRMLPVDINHSDWDALLEGEGAFDKNAVHPRHASMREVIKTRKAVRLGFRLVKGLKQTDMKALVARRGEGYRSVHDLWLRSGLSRSVLERLADADAFRSIGLDRRAALWAVKALDEQSAVERLPLFEGAGSDDLQIEPKVALPDMPAGEQVIHDYRTLTLSLKAHPVSFMREDFSRRGILRSRDLAATATGRWVTVAGLVLVRQRPGSANGVIFMTIEDETGIANIIVWEKTFQKYRRQVMGSRLVKVRGRLQNQSGVIHVVADHLEDITPMLGLLRREARRFGVNDRADGALRPSADAREKKKLRQLRLGLPARAAPEGEAAAQVAEVMPKGRNFH.

This sequence belongs to the DNA polymerase type-C family. DnaE2 subfamily.

Its subcellular location is the cytoplasm. It catalyses the reaction DNA(n) + a 2'-deoxyribonucleoside 5'-triphosphate = DNA(n+1) + diphosphate. Its function is as follows. DNA polymerase involved in damage-induced mutagenesis and translesion synthesis (TLS). It is not the major replicative DNA polymerase. This Rhizobium meliloti (strain 1021) (Ensifer meliloti) protein is Error-prone DNA polymerase 1.